The following is a 402-amino-acid chain: Elongation factor Tu (402 aa).

The tr-type G domain occupies 16-211 (KEHINIGTIG…AVDSYIDSPV (196 aa)). The interval 25–32 (GHVDHGKT) is G1. Residue 25–32 (GHVDHGKT) coordinates GTP. Residue T32 participates in Mg(2+) binding. Positions 66–70 (GITIN) are G2. Positions 87 to 90 (DCPG) are G3. GTP contacts are provided by residues 87–91 (DCPGH) and 142–145 (NKID). The G4 stretch occupies residues 142–145 (NKID). The interval 181-183 (SAR) is G5.

Belongs to the TRAFAC class translation factor GTPase superfamily. Classic translation factor GTPase family. EF-Tu/EF-1A subfamily. As to quaternary structure, monomer.

It localises to the cytoplasm. The enzyme catalyses GTP + H2O = GDP + phosphate + H(+). In terms of biological role, GTP hydrolase that promotes the GTP-dependent binding of aminoacyl-tRNA to the A-site of ribosomes during protein biosynthesis. The polypeptide is Elongation factor Tu (Mesomycoplasma hyopneumoniae (strain J / ATCC 25934 / NCTC 10110) (Mycoplasma hyopneumoniae)).